A 128-amino-acid polypeptide reads, in one-letter code: Large-conductance mechanosensitive channel (128 aa).

2 consecutive transmembrane segments (helical) span residues 11–31 and 70–90; these read FALK…AAFG and GAFI…FIFV.

This sequence belongs to the MscL family. Homopentamer.

Its subcellular location is the cell membrane. Channel that opens in response to stretch forces in the membrane lipid bilayer. May participate in the regulation of osmotic pressure changes within the cell. The sequence is that of Large-conductance mechanosensitive channel from Listeria innocua serovar 6a (strain ATCC BAA-680 / CLIP 11262).